We begin with the raw amino-acid sequence, 359 residues long: UDP-N-acetylglucosamine--N-acetylmuramyl-(pentapeptide) pyrophosphoryl-undecaprenol N-acetylglucosamine transferase (359 aa).

UDP-N-acetyl-alpha-D-glucosamine-binding positions include Thr-15–Gly-17, Asn-127, Arg-166, Ser-191, Ile-245, Ala-264–Glu-269, and Gln-290.

The protein belongs to the glycosyltransferase 28 family. MurG subfamily.

The protein localises to the cell inner membrane. It catalyses the reaction di-trans,octa-cis-undecaprenyl diphospho-N-acetyl-alpha-D-muramoyl-L-alanyl-D-glutamyl-meso-2,6-diaminopimeloyl-D-alanyl-D-alanine + UDP-N-acetyl-alpha-D-glucosamine = di-trans,octa-cis-undecaprenyl diphospho-[N-acetyl-alpha-D-glucosaminyl-(1-&gt;4)]-N-acetyl-alpha-D-muramoyl-L-alanyl-D-glutamyl-meso-2,6-diaminopimeloyl-D-alanyl-D-alanine + UDP + H(+). It functions in the pathway cell wall biogenesis; peptidoglycan biosynthesis. Cell wall formation. Catalyzes the transfer of a GlcNAc subunit on undecaprenyl-pyrophosphoryl-MurNAc-pentapeptide (lipid intermediate I) to form undecaprenyl-pyrophosphoryl-MurNAc-(pentapeptide)GlcNAc (lipid intermediate II). The protein is UDP-N-acetylglucosamine--N-acetylmuramyl-(pentapeptide) pyrophosphoryl-undecaprenol N-acetylglucosamine transferase of Pseudomonas putida (strain ATCC 47054 / DSM 6125 / CFBP 8728 / NCIMB 11950 / KT2440).